Consider the following 608-residue polypeptide: MSAVAGTADSLQNRFRSHFCGRLHTEFENKTIAVAGWVHRIRDHGGLIFIDLRDHTGICQLIIQPEKEELFRKAEALHTESVICVSGVVVRRSEETVNPRLASGEIEVVVEDIRVESNASPLPFPVADELQTSEELRLKYRFLDLRREKIHENIHFRSRLISEVRRYLEERSFMEIQTPILTSSSPEGARDFLVPSRLHPGKFYALPQAPQQFKQLLMVSGFSRYFQIAPCFRDEDARADRSPGEFYQIDMEMAFIEQDDLFEILEGMFKHLTEKMSNKRITQFPFPRISYKEVMNRYGSDKPDLRIPVEIEDVTELFVNSSFKVFAGNTKEGNCIKAMVLKGRGNESRQFYDKAERRAKELGSAGLAYIQYKEEGPKGPIVKFFSEDEMNDLKERLQIEAGDVVFFGAGKWERTCKIMGGMREYFSDLFELDRDELSFCWVVDFPMYEYDEAAKKIEFSHNPFSMPQGEMEALETMDPLDILAYQYDIVCNGIELSSGAIRNHRPDIMYRAFGIAGYEKAEVDKRFGHMIEAFNMGAPPHGGIAPGLDRLVMILRDEQNIREVIAFPMNQQAEDLMMAAPAEVSPLQLRELSLKLDLPKEEKKEKRS.

Residue E187 participates in L-aspartate binding. An aspartate region spans residues 211-214 (QQFK). R233 and H461 together coordinate L-aspartate. 233-235 (RDE) is an ATP binding site. Position 495 (E495) interacts with ATP. R502 is an L-aspartate binding site. 547 to 550 (GLDR) contacts ATP.

This sequence belongs to the class-II aminoacyl-tRNA synthetase family. Type 1 subfamily. As to quaternary structure, homodimer.

The protein resides in the cytoplasm. The enzyme catalyses tRNA(Asx) + L-aspartate + ATP = L-aspartyl-tRNA(Asx) + AMP + diphosphate. Functionally, aspartyl-tRNA synthetase with relaxed tRNA specificity since it is able to aspartylate not only its cognate tRNA(Asp) but also tRNA(Asn). Reaction proceeds in two steps: L-aspartate is first activated by ATP to form Asp-AMP and then transferred to the acceptor end of tRNA(Asp/Asn). The polypeptide is Aspartate--tRNA(Asp/Asn) ligase (Chlorobium phaeobacteroides (strain BS1)).